Consider the following 306-residue polypeptide: MKALSIPDVLAEVAVLVRPHFGKGKPADYIPQLATVPGGKFGMAVRMVDGDEHVIGDADEGFSVQSITKVFALGLALNRLGDEIWTRVGKEPSGTPFNHLSLLEAEQGVPRNPFINAGALAVTDVLMDVTRDPAALVRDFGGFLCGERLEIDPAVATSELAHAWQNRAIASLMRAKGTITHDPEAVVAAYCRQCALSMSCRQLARAFLPLAAGGFSPIAQETVFPERLTRRLNALLLTCGIYDSVGSFAYRVGLPAKSGVGGGIVAVVPGKATVAVWSPELDRFGTSVVGTAALEAFSQITNCSVL.

Residues serine 66, asparagine 116, glutamate 159, asparagine 166, tyrosine 190, tyrosine 242, and valine 260 each contribute to the substrate site.

The protein belongs to the glutaminase family. Homotetramer.

The enzyme catalyses L-glutamine + H2O = L-glutamate + NH4(+). The protein is Glutaminase of Caulobacter vibrioides (strain ATCC 19089 / CIP 103742 / CB 15) (Caulobacter crescentus).